A 433-amino-acid polypeptide reads, in one-letter code: Citrate synthase, mitochondrial (433 aa).

Residues His-274 and His-320 contribute to the active site. Position 329 (Arg-329) interacts with oxaloacetate. Residue Asp-375 is part of the active site. The oxaloacetate site is built by Arg-401 and Arg-421.

This sequence belongs to the citrate synthase family. In terms of assembly, homodimer.

The protein resides in the mitochondrion matrix. It carries out the reaction oxaloacetate + acetyl-CoA + H2O = citrate + CoA + H(+). It functions in the pathway carbohydrate metabolism; tricarboxylic acid cycle; isocitrate from oxaloacetate: step 1/2. In terms of biological role, key enzyme of the Krebs tricarboxylic acid cycle which catalyzes the synthesis of citrate from acetyl coenzyme A and oxaloacetate. This chain is Citrate synthase, mitochondrial (CS), found in Gallus gallus (Chicken).